The following is a 218-amino-acid chain: Large ribosomal subunit protein uL16 (218 aa).

It belongs to the universal ribosomal protein uL16 family. In terms of assembly, component of the large ribosomal subunit. Mature ribosomes consist of a small (40S) and a large (60S) subunit. The 40S subunit contains about 33 different proteins and 1 molecule of RNA (18S). The 60S subunit contains about 49 different proteins and 3 molecules of RNA (28S, 5.8S and 5S).

In Drosophila melanogaster (Fruit fly), this protein is Large ribosomal subunit protein uL16 (RpL10).